The chain runs to 916 residues: Protein translocase subunit SecA (916 aa).

ATP-binding positions include Q87, 105–109 (GEGKT), and D507. Residues C900, C902, C911, and H912 each contribute to the Zn(2+) site.

This sequence belongs to the SecA family. As to quaternary structure, monomer and homodimer. Part of the essential Sec protein translocation apparatus which comprises SecA, SecYEG and auxiliary proteins SecDF-YajC and YidC. Zn(2+) is required as a cofactor.

It localises to the cell inner membrane. Its subcellular location is the cytoplasm. The catalysed reaction is ATP + H2O + cellular proteinSide 1 = ADP + phosphate + cellular proteinSide 2.. In terms of biological role, part of the Sec protein translocase complex. Interacts with the SecYEG preprotein conducting channel. Has a central role in coupling the hydrolysis of ATP to the transfer of proteins into and across the cell membrane, serving both as a receptor for the preprotein-SecB complex and as an ATP-driven molecular motor driving the stepwise translocation of polypeptide chains across the membrane. This is Protein translocase subunit SecA from Neisseria gonorrhoeae (strain NCCP11945).